The sequence spans 427 residues: UPF0229 protein YeaH (427 aa).

A disordered region spans residues 84 to 110 (QSDRIERPQGGGGGSGSGQGQASQDGE). Over residues 92–102 (QGGGGGSGSGQ) the composition is skewed to gly residues.

It belongs to the UPF0229 family.

This is UPF0229 protein YeaH from Escherichia fergusonii (strain ATCC 35469 / DSM 13698 / CCUG 18766 / IAM 14443 / JCM 21226 / LMG 7866 / NBRC 102419 / NCTC 12128 / CDC 0568-73).